Consider the following 145-residue polypeptide: Protein ImpA (145 aa).

Residues Ser64 and Lys101 each act as for autocatalytic cleavage activity in the active site.

It belongs to the peptidase S24 family.

Its function is as follows. Involved in UV protection and mutation. This Escherichia coli protein is Protein ImpA.